Consider the following 612-residue polypeptide: Actin-binding LIM protein 2 (612 aa).

4 consecutive LIM zinc-binding domains span residues 22 to 81 (ILCN…LYGT), 81 to 141 (TRCF…TLVG), 151 to 210 (RSCG…KFGI), and 210 to 270 (IRCD…ARTE). Cys83, Cys86, His103, Cys106, Cys109, Cys112, Cys131, and Cys134 together coordinate Zn(2+). Positions 212, 215, 232, 235, 238, 241, 260, and 263 each coordinate Zn(2+). Basic and acidic residues predominate over residues 269-278 (TEDKSKETRT). Disordered stretches follow at residues 269-295 (TEDKSKETRTSSESIVSVPASSTSGSP) and 341-433 (AVGD…DNIY). 2 stretches are compositionally biased toward low complexity: residues 279–295 (SSESIVSVPASSTSGSP) and 364–373 (SSPSSAGSVS). 4 positions are modified to phosphoserine: Ser282, Ser294, Ser365, and Ser368. Residues 394-416 (SGRSTPSLSVHSDSRPPSSTYQQ) show a composition bias toward polar residues. Ser453 bears the Phosphoserine mark. The segment at 471-520 (ADTRTNSPDLDSQSLSLSSGADQEPLQRMPGDSLYSRFPYSKPDTLPGPR) is disordered. Thr473 carries the post-translational modification Phosphothreonine. Residues Ser477 and Ser579 each carry the phosphoserine modification. Positions 477-489 (SPDLDSQSLSLSS) are enriched in low complexity. The 69-residue stretch at 544 to 612 (TREYKIYPYD…NDLKKKALLF (69 aa)) folds into the HP domain.

Interacts with F-actin and ABRA.

The protein localises to the cytoplasm. In terms of biological role, may act as scaffold protein. May stimulate ABRA activity and ABRA-dependent SRF transcriptional activity. The protein is Actin-binding LIM protein 2 (Ablim2) of Rattus norvegicus (Rat).